A 138-amino-acid polypeptide reads, in one-letter code: Iron sulfur cluster assembly protein 1 (138 aa).

This sequence belongs to the NifU family. As to quaternary structure, component of the core Fe-S cluster (ISC) assembly machinery. Requires [2Fe-2S] cluster as cofactor.

It is found in the cytoplasm. Its pathway is cofactor biosynthesis; iron-sulfur cluster biosynthesis. In terms of biological role, scaffold protein for the de novo synthesis of iron-sulfur (Fe-S) clusters within mitosomes, which is required for maturation of both [2Fe-2S] and [4Fe-4S] proteins. First, a [2Fe-2S] cluster is transiently assembled on the scaffold protein ISU1. In a second step, the cluster is released from ISU1, transferred to a glutaredoxin, followed by the formation of [2Fe-2S] proteins, the synthesis of [4Fe-4S] clusters and their target-specific insertion into the recipient apoproteins. Cluster assembly on ISU1 depends on the function of the cysteine desulfurase complex NFS1-ISD11, which serves as the sulfur donor for cluster synthesis, the iron-binding protein frataxin as the putative iron donor, and the electron transfer chain comprised of ferredoxin reductase and ferredoxin, which receive their electrons from NADH. In Trachipleistophora hominis (Microsporidian parasite), this protein is Iron sulfur cluster assembly protein 1 (ISU1).